Reading from the N-terminus, the 706-residue chain is Lethal(3)malignant brain tumor-like protein 2 (706 aa).

Residues 1-85 (MEKPRGVEET…GTPRSLDGSG (85 aa)) form a disordered region. Ser13 is subject to Phosphoserine. The segment covering 15–26 (PMEEEEEDDDLE) has biased composition (acidic residues). The segment covering 39–50 (SSAGSESSSYLE) has biased composition (low complexity). Basic and acidic residues predominate over residues 54–63 (EAEHEDREAG). Residue Ser68 is modified to Phosphoserine. Thr77 is modified (phosphothreonine). An FCS-type zinc finger spans residues 82-117 (DGSGSEPAVCEMCGIVGTREAFFSKTKRFCSVSCSR). Positions 91, 94, 111, and 115 each coordinate Zn(2+). MBT repeat units follow at residues 180 to 284 (FDWG…LVPP), 292 to 392 (TDWK…IKLS), 398 to 501 (MAHH…LTPP), and 509 to 605 (FSWE…LQPP). Position 339 is a phosphoserine (Ser339). A Glycyl lysine isopeptide (Lys-Gly) (interchain with G-Cter in SUMO2) cross-link involves residue Lys406. The interval 606–669 (VATEPTTPLK…KAPSEPAPDE (64 aa)) is disordered. Positions 620 to 635 (TKKKKKQFGKKRKRIP) are enriched in basic residues. Glycyl lysine isopeptide (Lys-Gly) (interchain with G-Cter in SUMO2) cross-links involve residues Lys648, Lys660, and Lys676. The segment at 685 to 706 (ADKALSPELPVPVENIKQETDD) is disordered. Residue Ser690 is modified to Phosphoserine. Lys701 is covalently cross-linked (Glycyl lysine isopeptide (Lys-Gly) (interchain with G-Cter in SUMO1); alternate). Residue Lys701 forms a Glycyl lysine isopeptide (Lys-Gly) (interchain with G-Cter in SUMO2); alternate linkage.

Part of the E2F6.com-1 complex in G0 phase composed of E2F6, MGA, MAX, TFDP1, CBX3, BAT8, EUHMTASE1, RING1, RNF2, MBLR, BAT8 and YAF2.

Its subcellular location is the nucleus. Its function is as follows. Putative Polycomb group (PcG) protein. PcG proteins maintain the transcriptionally repressive state of genes, probably via a modification of chromatin, rendering it heritably changed in its expressibility. Its association with a chromatin-remodeling complex suggests that it may contribute to prevent expression of genes that trigger the cell into mitosis. Binds to monomethylated and dimethylated 'Lys-20' on histone H4. Binds histone H3 peptides that are monomethylated or dimethylated on 'Lys-4', 'Lys-9' or 'Lys-27'. This is Lethal(3)malignant brain tumor-like protein 2 (L3MBTL2) from Bos taurus (Bovine).